We begin with the raw amino-acid sequence, 341 residues long: Barley B recombinant-like protein A (341 aa).

The segment covering 48-62 (HQHQQHVPHHHHQPH) has biased composition (basic residues). Disordered regions lie at residues 48–95 (HQHQ…MNFA) and 150–234 (MQQQ…RKNI). The segment covering 68-77 (GANGNANGGA) has biased composition (low complexity). The span at 78 to 90 (MPPPPATEAPPSM) shows a compositional bias: pro residues. Over residues 190 to 211 (PKKRQQGRQPKVPRAKKPKKSA) the composition is skewed to basic residues.

The protein belongs to the BBR/BPC family.

It localises to the nucleus. Transcriptional regulator that specifically binds to GA-rich elements (GAGA-repeats) present in regulatory sequences of genes involved in developmental processes. The protein is Barley B recombinant-like protein A of Oryza sativa subsp. japonica (Rice).